Here is a 297-residue protein sequence, read N- to C-terminus: MTRSLGGAELATSIRNDASVAAAALNDLGTRPKLAVVQATDDESTAWYVRSIASAAKRTGILCDIVDLGAAASTEQIRSTLVELGHDPDVHGIILQTPLPDGTDLDALREAINPAKDVDGANPVSLGRLVARLPAFAPATAQAVIALLDHHGISPHARTATVVGRSTVVGSPVAHLLVQRNATVTVCHRHTTDLAAGTRDADILVVAVGIPGLITADHVADGAVVIDVGTTATADGQLLGDVDAAAVDGRAGALTPVPGGVGPVTTALLLNHTVDAAGTQYAQTRSESVLAGFRSSV.

NADP(+) contacts are provided by residues 164 to 166 and T230; that span reads GRS.

It belongs to the tetrahydrofolate dehydrogenase/cyclohydrolase family. In terms of assembly, homodimer.

It catalyses the reaction (6R)-5,10-methylene-5,6,7,8-tetrahydrofolate + NADP(+) = (6R)-5,10-methenyltetrahydrofolate + NADPH. The catalysed reaction is (6R)-5,10-methenyltetrahydrofolate + H2O = (6R)-10-formyltetrahydrofolate + H(+). It participates in one-carbon metabolism; tetrahydrofolate interconversion. Functionally, catalyzes the oxidation of 5,10-methylenetetrahydrofolate to 5,10-methenyltetrahydrofolate and then the hydrolysis of 5,10-methenyltetrahydrofolate to 10-formyltetrahydrofolate. The polypeptide is Bifunctional protein FolD 1 (Rhodococcus jostii (strain RHA1)).